Here is a 134-residue protein sequence, read N- to C-terminus: Phosphoribosyl-AMP cyclohydrolase (134 aa).

Asp77 is a binding site for Mg(2+). Cys78 is a Zn(2+) binding site. Residues Asp79 and Asp81 each coordinate Mg(2+). Zn(2+) is bound by residues Cys95 and Cys102.

Belongs to the PRA-CH family. In terms of assembly, homodimer. Mg(2+) is required as a cofactor. Requires Zn(2+) as cofactor.

The protein resides in the cytoplasm. It carries out the reaction 1-(5-phospho-beta-D-ribosyl)-5'-AMP + H2O = 1-(5-phospho-beta-D-ribosyl)-5-[(5-phospho-beta-D-ribosylamino)methylideneamino]imidazole-4-carboxamide. The protein operates within amino-acid biosynthesis; L-histidine biosynthesis; L-histidine from 5-phospho-alpha-D-ribose 1-diphosphate: step 3/9. Its function is as follows. Catalyzes the hydrolysis of the adenine ring of phosphoribosyl-AMP. The polypeptide is Phosphoribosyl-AMP cyclohydrolase (Pseudomonas paraeruginosa (strain DSM 24068 / PA7) (Pseudomonas aeruginosa (strain PA7))).